The chain runs to 1081 residues: Disheveled-associated activator of morphogenesis 1-A (1081 aa).

In terms of domain architecture, GBD/FH3 spans 45-418; the sequence is LPVPPVEELD…QIVIQNEKGQ (374 aa). Disordered regions lie at residues 455–476 and 519–615; these read KEHN…AKTQ and RTVC…PLKS. Residues 526–536 show a composition bias toward pro residues; that stretch reads PGGPPPPPGAP. The span at 538-547 shows a compositional bias: low complexity; sequence GPMSMPSGNF. The segment covering 548–585 has biased composition (pro residues); it reads MPPPPPPPPPFPGGMAPPPPPPPPPPPPPGGPPPPPGL. Positions 586–600 are enriched in low complexity; sequence PLLGAAPPGAPLGLS. The FH2 domain maps to 603–1012; it reads KKNIPQPKNP…EERRIRMEAQ (410 aa). The interval 696 to 705 is actin-binding; it reads AQNCNILLSR. Residues 1013-1029 are compositionally biased toward basic and acidic residues; the sequence is LKEQRERERKARKAKEN. Disordered stretches follow at residues 1013–1038 and 1060–1081; these read LKEQ…EFDD and RKRI…KLNY. Residues 1030–1061 enclose the DAD domain; the sequence is GEEEGEFDDLVSALRSGEVFDKDLSKLKRNRK. Residues 1070–1081 show a composition bias toward basic and acidic residues; the sequence is SSRERPVTKLNY.

The protein resides in the cytoplasm. The protein localises to the cytoskeleton. Its subcellular location is the cilium basal body. Binds to disheveled (dsh) and Rho, and mediates Wnt-induced dsh-Rho complex formation during gastrulation. May play a role as a scaffolding protein to recruit Rho-GDP and Rho-GEF, thereby enhancing Rho-GTP formation. Can direct nucleation and elongation of new actin filaments. Involved in building functional cilia. Involved in building functional cilia. Involved in the organization of the subapical actin network in multiciliated epithelial cells. In Xenopus laevis (African clawed frog), this protein is Disheveled-associated activator of morphogenesis 1-A (daam1-a).